Reading from the N-terminus, the 420-residue chain is 2-(3-amino-3-carboxypropyl)histidine synthase subunit 1 (420 aa).

The [4Fe-4S] cluster site is built by cysteine 127, cysteine 233, and cysteine 362.

Belongs to the DPH1/DPH2 family. DPH1 subfamily. In terms of assembly, component of the 2-(3-amino-3-carboxypropyl)histidine synthase complex composed of DPH1, DPH2, DPH3 and a NADH-dependent reductase, predominantly CBR1. The cofactor is [4Fe-4S] cluster.

It is found in the cytoplasm. It carries out the reaction L-histidyl-[translation elongation factor 2] + S-adenosyl-L-methionine = 2-[(3S)-amino-3-carboxypropyl]-L-histidyl-[translation elongation factor 2] + S-methyl-5'-thioadenosine + H(+). The protein operates within protein modification; peptidyl-diphthamide biosynthesis. Catalyzes the first step of diphthamide biosynthesis, a post-translational modification of histidine which occurs in elongation factor 2. DPH1 and DPH2 transfer a 3-amino-3-carboxypropyl (ACP) group from S-adenosyl-L-methionine (SAM) to a histidine residue, the reaction is assisted by a reduction system comprising DPH3 and a NADH-dependent reductase, predominantly CBR1. The sequence is that of 2-(3-amino-3-carboxypropyl)histidine synthase subunit 1 (DPH1) from Debaryomyces hansenii (strain ATCC 36239 / CBS 767 / BCRC 21394 / JCM 1990 / NBRC 0083 / IGC 2968) (Yeast).